Here is a 222-residue protein sequence, read N- to C-terminus: tRNA (guanine-N(1)-)-methyltransferase (222 aa).

Residues Gly111 and Leu131–Ile136 contribute to the S-adenosyl-L-methionine site.

Belongs to the RNA methyltransferase TrmD family. Homodimer.

Its subcellular location is the cytoplasm. It catalyses the reaction guanosine(37) in tRNA + S-adenosyl-L-methionine = N(1)-methylguanosine(37) in tRNA + S-adenosyl-L-homocysteine + H(+). Functionally, specifically methylates guanosine-37 in various tRNAs. This chain is tRNA (guanine-N(1)-)-methyltransferase, found in Leptospira borgpetersenii serovar Hardjo-bovis (strain JB197).